Here is a 97-residue protein sequence, read N- to C-terminus: Large ribosomal subunit protein uL23 (97 aa).

This sequence belongs to the universal ribosomal protein uL23 family. As to quaternary structure, part of the 50S ribosomal subunit. Contacts protein L29, and trigger factor when it is bound to the ribosome.

One of the early assembly proteins it binds 23S rRNA. One of the proteins that surrounds the polypeptide exit tunnel on the outside of the ribosome. Forms the main docking site for trigger factor binding to the ribosome. This is Large ribosomal subunit protein uL23 from Rhizobium etli (strain CIAT 652).